The following is a 516-amino-acid chain: UvrABC system protein C (516 aa).

Positions 9–87 (HLPGCYLFKD…IKKHWPRYNI (79 aa)) constitute a GIY-YIG domain. A UVR domain is found at 191–226 (GELIESMEKEMKKMAAKQMFEQAMALRDEISALEYL).

This sequence belongs to the UvrC family. Interacts with UvrB in an incision complex.

The protein localises to the cytoplasm. The UvrABC repair system catalyzes the recognition and processing of DNA lesions. UvrC both incises the 5' and 3' sides of the lesion. The N-terminal half is responsible for the 3' incision and the C-terminal half is responsible for the 5' incision. This is UvrABC system protein C from Methanosarcina acetivorans (strain ATCC 35395 / DSM 2834 / JCM 12185 / C2A).